A 125-amino-acid polypeptide reads, in one-letter code: Large ribosomal subunit protein eL8 (125 aa).

The protein belongs to the eukaryotic ribosomal protein eL8 family. In terms of assembly, part of the 50S ribosomal subunit. Probably part of the RNase P complex.

Its subcellular location is the cytoplasm. Functionally, multifunctional RNA-binding protein that recognizes the K-turn motif in ribosomal RNA, the RNA component of RNase P, box H/ACA, box C/D and box C'/D' sRNAs. In Metallosphaera sedula (strain ATCC 51363 / DSM 5348 / JCM 9185 / NBRC 15509 / TH2), this protein is Large ribosomal subunit protein eL8.